The chain runs to 828 residues: Zinc finger protein 438 (828 aa).

Disordered stretches follow at residues 1–29 (MQNSVSVPPKDEGESNIPSGTIQSRKGLQ), 143–173 (KSGCSKAPAQTQMCPQMSPSPPHHPELLYKP), and 193–231 (ALTNGSDHGDLRPPVTNTHGSLNPPATPASSTPEEPAKQ). Composition is skewed to polar residues over residues 16–29 (NIPSGTIQSRKGLQ) and 150–159 (PAQTQMCPQM). C2H2-type zinc fingers lie at residues 507-529 (HRCHVCNHHFQFKQHLRDHMNTH), 535-557 (YSCRICRKSYVRPGSLSTHMKLH), and 567-590 (MCCEFCAKVFGHIRVYFGHLKEVH). Residues 680-721 (EGTFPGSKGTQEELVQHASPDWKRHPERGKPEKVHSSSEESH) are disordered. Residues 689–721 (TQEELVQHASPDWKRHPERGKPEKVHSSSEESH) show a composition bias toward basic and acidic residues. Residues 776–799 (FNCLLCAEMLGRKEDLLHHWKHQH) form a C2H2-type 4 zinc finger.

This sequence belongs to the krueppel C2H2-type zinc-finger protein family. In terms of tissue distribution, ubiquitous.

Its subcellular location is the nucleus. In terms of biological role, isoform 1 acts as a transcriptional repressor. This is Zinc finger protein 438 (ZNF438) from Homo sapiens (Human).